Consider the following 142-residue polypeptide: Extracellular globin-1 (142 aa).

A Globin domain is found at 1 to 142 (ECLVTEGLKV…DQIIDGIKDI (142 aa)). The cysteines at positions 2 and 131 are disulfide-linked. Heme b is bound at residue His-94.

The protein belongs to the globin family. As to quaternary structure, the extracellular hemoglobin of the earthworm consists of 12 subunits that have a hexagonal bilayer structure with a molecular weight near 3.8 million. Each one-twelfth subunit is composed primarily of disulfide linked trimers (chains A, B, and C) and monomers (chain D).

The chain is Extracellular globin-1 from Lumbricus terrestris (Common earthworm).